The chain runs to 100 residues: Aspartyl/glutamyl-tRNA(Asn/Gln) amidotransferase subunit C (100 aa).

The protein belongs to the GatC family. In terms of assembly, heterotrimer of A, B and C subunits.

It carries out the reaction L-glutamyl-tRNA(Gln) + L-glutamine + ATP + H2O = L-glutaminyl-tRNA(Gln) + L-glutamate + ADP + phosphate + H(+). The enzyme catalyses L-aspartyl-tRNA(Asn) + L-glutamine + ATP + H2O = L-asparaginyl-tRNA(Asn) + L-glutamate + ADP + phosphate + 2 H(+). In terms of biological role, allows the formation of correctly charged Asn-tRNA(Asn) or Gln-tRNA(Gln) through the transamidation of misacylated Asp-tRNA(Asn) or Glu-tRNA(Gln) in organisms which lack either or both of asparaginyl-tRNA or glutaminyl-tRNA synthetases. The reaction takes place in the presence of glutamine and ATP through an activated phospho-Asp-tRNA(Asn) or phospho-Glu-tRNA(Gln). The sequence is that of Aspartyl/glutamyl-tRNA(Asn/Gln) amidotransferase subunit C from Staphylococcus epidermidis (strain ATCC 35984 / DSM 28319 / BCRC 17069 / CCUG 31568 / BM 3577 / RP62A).